The sequence spans 152 residues: Acyl carrier protein, mitochondrial (152 aa).

Residues 73-148 (KLINERVLLV…DIIKYVADKE (76 aa)) form the Carrier domain. The residue at position 108 (Ser-108) is an O-(pantetheine 4'-phosphoryl)serine.

It belongs to the acyl carrier protein (ACP) family. Complex I is composed of about 45 different subunits.

It localises to the mitochondrion. Its function is as follows. Carrier of the growing fatty acid chain in fatty acid biosynthesis. Accessory and non-catalytic subunit of the mitochondrial membrane respiratory chain NADH dehydrogenase (Complex I), which functions in the transfer of electrons from NADH to the respiratory chain. In Drosophila melanogaster (Fruit fly), this protein is Acyl carrier protein, mitochondrial.